The primary structure comprises 312 residues: Methionyl-tRNA formyltransferase (312 aa).

A disordered region spans residues 34–54 (PDAASGRRGKPQPSPVAREAA). 110-113 (SLLP) provides a ligand contact to (6S)-5,6,7,8-tetrahydrofolate.

Belongs to the Fmt family.

The enzyme catalyses L-methionyl-tRNA(fMet) + (6R)-10-formyltetrahydrofolate = N-formyl-L-methionyl-tRNA(fMet) + (6S)-5,6,7,8-tetrahydrofolate + H(+). Functionally, attaches a formyl group to the free amino group of methionyl-tRNA(fMet). The formyl group appears to play a dual role in the initiator identity of N-formylmethionyl-tRNA by promoting its recognition by IF2 and preventing the misappropriation of this tRNA by the elongation apparatus. The protein is Methionyl-tRNA formyltransferase of Mycobacterium tuberculosis (strain ATCC 25177 / H37Ra).